Consider the following 409-residue polypeptide: Putative kinase Y4dM (409 aa).

Catalysis depends on D293, which acts as the Proton acceptor.

Belongs to the HipA Ser/Thr kinase family.

The polypeptide is Putative kinase Y4dM (Sinorhizobium fredii (strain NBRC 101917 / NGR234)).